The following is a 297-amino-acid chain: Protease HtpX homolog (297 aa).

The next 2 membrane-spanning stretches (helical) occupy residues 14–34 (IVLL…VGYL) and 38–58 (SLET…IIMV). His144 provides a ligand contact to Zn(2+). Glu145 is an active-site residue. His148 lines the Zn(2+) pocket. Transmembrane regions (helical) follow at residues 159–179 (IALA…NWWF) and 199–219 (ILLL…AAAI). Position 228 (Glu228) interacts with Zn(2+).

It belongs to the peptidase M48B family. Zn(2+) serves as cofactor.

It localises to the cell membrane. This is Protease HtpX homolog from Leuconostoc mesenteroides subsp. mesenteroides (strain ATCC 8293 / DSM 20343 / BCRC 11652 / CCM 1803 / JCM 6124 / NCDO 523 / NBRC 100496 / NCIMB 8023 / NCTC 12954 / NRRL B-1118 / 37Y).